Consider the following 277-residue polypeptide: 5'-nucleotidase SurE (277 aa).

A divalent metal cation-binding residues include D16, D17, S48, and N101.

It belongs to the SurE nucleotidase family. Requires a divalent metal cation as cofactor.

The protein localises to the cytoplasm. The enzyme catalyses a ribonucleoside 5'-phosphate + H2O = a ribonucleoside + phosphate. In terms of biological role, nucleotidase that shows phosphatase activity on nucleoside 5'-monophosphates. In Parvibaculum lavamentivorans (strain DS-1 / DSM 13023 / NCIMB 13966), this protein is 5'-nucleotidase SurE.